We begin with the raw amino-acid sequence, 376 residues long: Carbamoyl phosphate synthase small chain (376 aa).

Positions 1–187 are CPSase; the sequence is MKALLVLEDG…AEDGSYAWRG (187 aa). L-glutamine contacts are provided by S45, G239, and G241. A Glutamine amidotransferase type-1 domain is found at 191–376; the sequence is PLLVYDFGIK…RKIIGESAGA (186 aa). The active-site Nucleophile is C266. L-glutamine contacts are provided by L267, Q270, N308, G310, and F311. Residues H349 and E351 contribute to the active site.

It belongs to the CarA family. As to quaternary structure, composed of two chains; the small (or glutamine) chain promotes the hydrolysis of glutamine to ammonia, which is used by the large (or ammonia) chain to synthesize carbamoyl phosphate. Tetramer of heterodimers (alpha,beta)4.

It carries out the reaction hydrogencarbonate + L-glutamine + 2 ATP + H2O = carbamoyl phosphate + L-glutamate + 2 ADP + phosphate + 2 H(+). The catalysed reaction is L-glutamine + H2O = L-glutamate + NH4(+). It participates in amino-acid biosynthesis; L-arginine biosynthesis; carbamoyl phosphate from bicarbonate: step 1/1. It functions in the pathway pyrimidine metabolism; UMP biosynthesis via de novo pathway; (S)-dihydroorotate from bicarbonate: step 1/3. In terms of biological role, small subunit of the glutamine-dependent carbamoyl phosphate synthetase (CPSase). CPSase catalyzes the formation of carbamoyl phosphate from the ammonia moiety of glutamine, carbonate, and phosphate donated by ATP, constituting the first step of 2 biosynthetic pathways, one leading to arginine and/or urea and the other to pyrimidine nucleotides. The small subunit (glutamine amidotransferase) binds and cleaves glutamine to supply the large subunit with the substrate ammonia. The chain is Carbamoyl phosphate synthase small chain from Desulfovibrio desulfuricans (strain ATCC 27774 / DSM 6949 / MB).